The primary structure comprises 1084 residues: Carbamoyl phosphate synthase large chain (1084 aa).

The interval 1-401 (MPRRQDVEKV…ALLKAVRSLE (401 aa)) is carboxyphosphate synthetic domain. ATP-binding residues include Arg129, Arg169, Gly175, Gly176, Arg208, Leu210, Glu215, Gly241, Val242, His243, Gln284, and Glu298. In terms of domain architecture, ATP-grasp 1 spans 133 to 327 (RALMKEIGEP…IAKVAAKIAV (195 aa)). Gln284, Glu298, and Asn300 together coordinate Mg(2+). Gln284, Glu298, and Asn300 together coordinate Mn(2+). Residues 402–546 (TGRDGLFHPA…YSCYDEENEA (145 aa)) are oligomerization domain. Residues 547-947 (VSPPGRKAVV…ALYKALLASG (401 aa)) form a carbamoyl phosphate synthetic domain region. The 191-residue stretch at 672 to 862 (DQLLSDLSIP…LAKVATQVIA (191 aa)) folds into the ATP-grasp 2 domain. 9 residues coordinate ATP: Arg708, Arg747, Glu753, Gly778, Val779, His780, Ser781, Gln821, and Glu833. Mg(2+) is bound by residues Gln821, Glu833, and Asn835. Mn(2+)-binding residues include Gln821, Glu833, and Asn835. The MGS-like domain occupies 948-1084 (VRVPHRGTVL…VGISAVQDWV (137 aa)). Residues 948–1084 (VRVPHRGTVL…VGISAVQDWV (137 aa)) are allosteric domain.

The protein belongs to the CarB family. In terms of assembly, composed of two chains; the small (or glutamine) chain promotes the hydrolysis of glutamine to ammonia, which is used by the large (or ammonia) chain to synthesize carbamoyl phosphate. Tetramer of heterodimers (alpha,beta)4. Mg(2+) is required as a cofactor. It depends on Mn(2+) as a cofactor.

It carries out the reaction hydrogencarbonate + L-glutamine + 2 ATP + H2O = carbamoyl phosphate + L-glutamate + 2 ADP + phosphate + 2 H(+). The catalysed reaction is hydrogencarbonate + NH4(+) + 2 ATP = carbamoyl phosphate + 2 ADP + phosphate + 2 H(+). It participates in amino-acid biosynthesis; L-arginine biosynthesis; carbamoyl phosphate from bicarbonate: step 1/1. It functions in the pathway pyrimidine metabolism; UMP biosynthesis via de novo pathway; (S)-dihydroorotate from bicarbonate: step 1/3. Its function is as follows. Large subunit of the glutamine-dependent carbamoyl phosphate synthetase (CPSase). CPSase catalyzes the formation of carbamoyl phosphate from the ammonia moiety of glutamine, carbonate, and phosphate donated by ATP, constituting the first step of 2 biosynthetic pathways, one leading to arginine and/or urea and the other to pyrimidine nucleotides. The large subunit (synthetase) binds the substrates ammonia (free or transferred from glutamine from the small subunit), hydrogencarbonate and ATP and carries out an ATP-coupled ligase reaction, activating hydrogencarbonate by forming carboxy phosphate which reacts with ammonia to form carbamoyl phosphate. The sequence is that of Carbamoyl phosphate synthase large chain from Symbiobacterium thermophilum (strain DSM 24528 / JCM 14929 / IAM 14863 / T).